Here is a 157-residue protein sequence, read N- to C-terminus: uncharacterized protein (157 aa).

Residues 33–134 (NLKHFLDVAR…MYRADKLSRL (102 aa)) form the HD domain.

This is an uncharacterized protein from Clostridium beijerinckii (strain ATCC 51743 / NCIMB 8052) (Clostridium acetobutylicum).